A 363-amino-acid chain; its full sequence is Protein-glutamate methylesterase/protein-glutamine glutaminase of group 3 operon (363 aa).

A Response regulatory domain is found at 7 to 124 (RVLIVDDSAS…RQALMESSGR (118 aa)). Asp58 carries the 4-aspartylphosphate modification. The CheB-type methylesterase domain occupies 166–357 (PTTERIVCIG…REIMAWQQAK (192 aa)). Residues Ser177, His203, and Asp299 contribute to the active site.

It belongs to the CheB family. In terms of processing, phosphorylated by CheA. Phosphorylation of the N-terminal regulatory domain activates the methylesterase activity.

It localises to the cytoplasm. It carries out the reaction [protein]-L-glutamate 5-O-methyl ester + H2O = L-glutamyl-[protein] + methanol + H(+). It catalyses the reaction L-glutaminyl-[protein] + H2O = L-glutamyl-[protein] + NH4(+). Its function is as follows. Involved in chemotaxis. Part of a chemotaxis signal transduction system that modulates chemotaxis in response to various stimuli. Catalyzes the demethylation of specific methylglutamate residues introduced into the chemoreceptors (methyl-accepting chemotaxis proteins or MCP) by CheR. Also mediates the irreversible deamidation of specific glutamine residues to glutamic acid. The polypeptide is Protein-glutamate methylesterase/protein-glutamine glutaminase of group 3 operon (Rhodopseudomonas palustris (strain ATCC BAA-98 / CGA009)).